The chain runs to 224 residues: 7-cyano-7-deazaguanine synthase (224 aa).

ATP is bound at residue 9-19 (LSGGLDSATVL). Positions 189, 199, 202, and 205 each coordinate Zn(2+).

Belongs to the QueC family. Zn(2+) serves as cofactor.

It catalyses the reaction 7-carboxy-7-deazaguanine + NH4(+) + ATP = 7-cyano-7-deazaguanine + ADP + phosphate + H2O + H(+). It participates in purine metabolism; 7-cyano-7-deazaguanine biosynthesis. Functionally, catalyzes the ATP-dependent conversion of 7-carboxy-7-deazaguanine (CDG) to 7-cyano-7-deazaguanine (preQ(0)). The chain is 7-cyano-7-deazaguanine synthase from Ralstonia pickettii (strain 12J).